We begin with the raw amino-acid sequence, 1086 residues long: NAD(P) transhydrogenase, mitochondrial (1086 aa).

The N-terminal 43 residues, 1 to 43 (MANLLKTVVTGCSCPFLSNLGSCKVLPGKKNFLRAFHTHRILW), are a transit peptide targeting the mitochondrion. Topologically, residues 44–474 (CKAPVKPGIP…TITPFRKTMT (431 aa)) are mitochondrial matrix. Lys70 is subject to N6-acetyllysine. An N6-succinyllysine modification is found at Lys117. 182 to 184 (RVT) serves as a coordination point for NAD(+). Lys224 carries the N6-succinyllysine modification. NAD(+)-binding positions include Val237, 257 to 259 (DTR), and Gly287. An N6-succinyllysine modification is found at Lys294. The NAD(+) site is built by Glu300 and Leu319. At Lys331 the chain carries N6-succinyllysine. The residue at position 397 (Lys397) is an N6-acetyllysine. 4 helical membrane passes run 475–493 (SASVYTAGLTGILGLGIAA), 501–521 (MVTTFGLAGIVGYHTVWGVTP), 527–546 (LMSVTNAISGLTAVGGLVLM), and 558–578 (GLAALATFISSVNIAGGFLVT). At 579 to 595 (QRMLDMFKRPTDPPEYN) the chain is on the mitochondrial matrix side. 5 helical membrane-spanning segments follow: residues 596 to 616 (YLYLLPAGTFVGGYLASLYSG), 622 to 642 (IMYLGSGLCCVGALAGLSTQG), 646 to 666 (LGNALGMIGVAGGLAATLGGL), 672 to 691 (LLAQMSGAMALGGTIGLTIA), and 702 to 722 (LVAAFHSLVGLAAVLTCIAEY). The Cytoplasmic portion of the chain corresponds to 723–739 (IIEYPHFATDAAANLTK). Transmembrane regions (helical) follow at residues 740 to 760 (IVAYLGTYIGGVTFSGSLVAY), 778 to 797 (HLLNAGLLAASVGGIIPFMM), 801 to 819 (FTTGITCLGSVSALSAVMG), 833 to 853 (VVITVLNSYSGWALCAEGFLL), and 857 to 879 (LLTIVGALIGSSGAILSYIMCVA). The Mitochondrial matrix segment spans residues 880 to 1086 (MNRSLANVIL…QAKVRESYQK (207 aa)). NADP(+) contacts are provided by residues Tyr933, 965-970 (VAGRMP), 1007-1011 (GANDT), 1026-1027 (GM), 1042-1049 (KRSLGVGY), and 1068-1069 (DA). Lys1079 is modified (N6-succinyllysine).

It in the N-terminal section; belongs to the AlaDH/PNT family. The protein in the C-terminal section; belongs to the PNT beta subunit family. Homodimer.

It localises to the mitochondrion inner membrane. The catalysed reaction is NAD(+) + NADPH + H(+)(in) = NADH + NADP(+) + H(+)(out). The transhydrogenation between NADH and NADP is coupled to respiration and ATP hydrolysis and functions as a proton pump across the membrane. May play a role in reactive oxygen species (ROS) detoxification in the adrenal gland. This Ovis aries (Sheep) protein is NAD(P) transhydrogenase, mitochondrial (NNT).